A 167-amino-acid chain; its full sequence is S-ribosylhomocysteine lyase (167 aa).

Positions 54, 58, and 128 each coordinate Fe cation.

Belongs to the LuxS family. In terms of assembly, homodimer. Fe cation serves as cofactor.

The enzyme catalyses S-(5-deoxy-D-ribos-5-yl)-L-homocysteine = (S)-4,5-dihydroxypentane-2,3-dione + L-homocysteine. In terms of biological role, involved in the synthesis of autoinducer 2 (AI-2) which is secreted by bacteria and is used to communicate both the cell density and the metabolic potential of the environment. The regulation of gene expression in response to changes in cell density is called quorum sensing. Catalyzes the transformation of S-ribosylhomocysteine (RHC) to homocysteine (HC) and 4,5-dihydroxy-2,3-pentadione (DPD). This Haemophilus influenzae (strain 86-028NP) protein is S-ribosylhomocysteine lyase.